The sequence spans 511 residues: Glucans biosynthesis protein G (511 aa).

An N-terminal signal peptide occupies residues 1–22 (MMKMRWLGAAIMLTLYASSSWA).

This sequence belongs to the OpgD/OpgG family.

Its subcellular location is the periplasm. It participates in glycan metabolism; osmoregulated periplasmic glucan (OPG) biosynthesis. Functionally, involved in the biosynthesis of osmoregulated periplasmic glucans (OPGs). This Salmonella enteritidis PT4 (strain P125109) protein is Glucans biosynthesis protein G.